The following is a 341-amino-acid chain: L-amino acid-D/L-Glu epimerase (341 aa).

Substrate-binding positions include Thr132 and 157–159; that span reads KIK. Residues Asp186, Glu212, and Asp237 each contribute to the Mg(2+) site. Substrate-binding positions include Lys261 and 315–317; that span reads DLD.

It belongs to the mandelate racemase/muconate lactonizing enzyme family. It depends on Mg(2+) as a cofactor.

In terms of biological role, catalyzes the epimerization of dipeptides with L-Glu in the second position. Has epimerase activity with L-Gly-L-Glu, L-Ala-L-Glu, L-Ser-L-Glu, L-Pro-L-Glu, L-Val-L-Glu, L-Met-L-Glu, L-Thr-L-Glu and L-Phe-L-Glu (in vitro). The chain is L-amino acid-D/L-Glu epimerase from Sulfurimonas denitrificans (strain ATCC 33889 / DSM 1251) (Thiomicrospira denitrificans (strain ATCC 33889 / DSM 1251)).